Here is a 608-residue protein sequence, read N- to C-terminus: MSSKHWDYKKDLVLSHLAGLCQSNPHVRLIESERVVISAENQEDKITLISGGGSGHEPLHAGFVTKDGLLDAAVAGFIFASPSTKQIFSAIKAKPSKKGTLIIVKNYTGDILHFGLAAEKAKAEGLNAELLIVQDDVSVGKAKNGLVGRRGLAGTSLVHKILGAKAYLQKDNLELHQLVTFGEKVVANLVTIGASLDHVTIPARANKQEEDDSDDEHGYEVLKHDEFEIGMGIHNEPGIKKSSPIPTVDELVAELLEYLLSTTDKDRNYVQFDKNDEVVLLINNLGGTSVLELYAIQNIVVDQLASKYSIKPVRIFTGTFTTSLDGPGFSITLLNATKTGDKDILKFLDHKTSAPGWNSNISDWSGRVDNFIVAAPEIDEGDSSSKVSVDAKLYADLLESGVKKVISKEPKITLYDTVAGDGDCGETLANGSNAILKALAEGKLDLKDGVKSLVQITDIVETAMGGTSGGLYSIFISALAKSLKEKELSEGAYTLTLETISGSLQAALQSLFKYTRARTGDRTLIDALEPFVKEFAKSKDLKLANKAAHDGAEATRKLEAKFGRASYVAEEEFKQFESEGGLPDPGAIGLAALISGITDAYFKSETKL.

The 350-residue stretch at Tyr-8 to Trp-357 folds into the DhaK domain. Substrate is bound by residues Gly-53–His-56, Lys-105, and Asp-110. The active-site Tele-hemiaminal-histidine intermediate is the His-234. The DhaL domain maps to Lys-392 to Asp-599. ATP contacts are provided by residues Asp-421–Cys-424, Thr-467–Ser-468, Thr-523–Leu-524, and Asp-584–Gly-586.

The protein belongs to the dihydroxyacetone kinase (DAK) family.

It is found in the cytoplasm. The enzyme catalyses dihydroxyacetone + ATP = dihydroxyacetone phosphate + ADP + H(+). The catalysed reaction is D-glyceraldehyde + ATP = D-glyceraldehyde 3-phosphate + ADP + H(+). Its pathway is polyol metabolism; glycerol fermentation; glycerone phosphate from glycerol (oxidative route): step 2/2. Catalyzes both the phosphorylation of dihydroxyacetone and of glyceraldehyde. The protein is Dihydroxyacetone kinase (DAK) of Komagataella pastoris (Yeast).